The chain runs to 423 residues: uncharacterized protein (423 aa).

This sequence belongs to the asfivirus E423R family.

It localises to the virion. This is an uncharacterized protein from African swine fever virus (isolate Tick/Malawi/Lil 20-1/1983) (ASFV).